The chain runs to 848 residues: Dolabradiene synthase KSL4, chloroplastic (848 aa).

The transit peptide at 1–64 directs the protein to the chloroplast; that stretch reads MASLSFASSH…SRMPRNVDTH (64 aa). The disordered stretch occupies residues 148–168; sequence QRSDGSWGPDGGSGDHPSSPL. Mg(2+) is bound by residues Asp597, Asp601, Asn742, Ser746, and Glu750. Residues 597–601 carry the DDXXD motif motif; the sequence is DDLFD.

Belongs to the terpene synthase family. It depends on Mg(2+) as a cofactor.

The protein localises to the plastid. The protein resides in the chloroplast. The catalysed reaction is ent-copalyl diphosphate = dolabradiene + diphosphate. Its function is as follows. Involved in the production of antifungal dolabralexin phytoalexins in response to biotic and abiotic stresses. In response to fungal infection and in associtation with AN2, is involved in the production dolabradiene, a type of antifungal phytoalexin. Converts ent-copalyl disphosphate (ent-CPP) to dolabradiene. The chain is Dolabradiene synthase KSL4, chloroplastic from Zea mays (Maize).